Reading from the N-terminus, the 98-residue chain is UPF0251 protein Sputcn32_0687 (98 aa).

Belongs to the UPF0251 family.

This Shewanella putrefaciens (strain CN-32 / ATCC BAA-453) protein is UPF0251 protein Sputcn32_0687.